Reading from the N-terminus, the 342-residue chain is UDP-N-acetylglucosamine--N-acetylmuramyl-(pentapeptide) pyrophosphoryl-undecaprenol N-acetylglucosamine transferase (342 aa).

Residues 10-12 (TGG), asparagine 124, serine 177, and glutamine 275 each bind UDP-N-acetyl-alpha-D-glucosamine.

It belongs to the glycosyltransferase 28 family. MurG subfamily.

The protein localises to the cell inner membrane. The enzyme catalyses di-trans,octa-cis-undecaprenyl diphospho-N-acetyl-alpha-D-muramoyl-L-alanyl-D-glutamyl-meso-2,6-diaminopimeloyl-D-alanyl-D-alanine + UDP-N-acetyl-alpha-D-glucosamine = di-trans,octa-cis-undecaprenyl diphospho-[N-acetyl-alpha-D-glucosaminyl-(1-&gt;4)]-N-acetyl-alpha-D-muramoyl-L-alanyl-D-glutamyl-meso-2,6-diaminopimeloyl-D-alanyl-D-alanine + UDP + H(+). Its pathway is cell wall biogenesis; peptidoglycan biosynthesis. In terms of biological role, cell wall formation. Catalyzes the transfer of a GlcNAc subunit on undecaprenyl-pyrophosphoryl-MurNAc-pentapeptide (lipid intermediate I) to form undecaprenyl-pyrophosphoryl-MurNAc-(pentapeptide)GlcNAc (lipid intermediate II). This chain is UDP-N-acetylglucosamine--N-acetylmuramyl-(pentapeptide) pyrophosphoryl-undecaprenol N-acetylglucosamine transferase, found in Campylobacter jejuni subsp. jejuni serotype O:2 (strain ATCC 700819 / NCTC 11168).